The sequence spans 80 residues: Phosphoribosylformylglycinamidine synthase subunit PurS (80 aa).

Belongs to the PurS family. As to quaternary structure, homodimer. Part of the FGAM synthase complex composed of 1 PurL, 1 PurQ and 2 PurS subunits.

Its subcellular location is the cytoplasm. It carries out the reaction N(2)-formyl-N(1)-(5-phospho-beta-D-ribosyl)glycinamide + L-glutamine + ATP + H2O = 2-formamido-N(1)-(5-O-phospho-beta-D-ribosyl)acetamidine + L-glutamate + ADP + phosphate + H(+). Its pathway is purine metabolism; IMP biosynthesis via de novo pathway; 5-amino-1-(5-phospho-D-ribosyl)imidazole from N(2)-formyl-N(1)-(5-phospho-D-ribosyl)glycinamide: step 1/2. Functionally, part of the phosphoribosylformylglycinamidine synthase complex involved in the purines biosynthetic pathway. Catalyzes the ATP-dependent conversion of formylglycinamide ribonucleotide (FGAR) and glutamine to yield formylglycinamidine ribonucleotide (FGAM) and glutamate. The FGAM synthase complex is composed of three subunits. PurQ produces an ammonia molecule by converting glutamine to glutamate. PurL transfers the ammonia molecule to FGAR to form FGAM in an ATP-dependent manner. PurS interacts with PurQ and PurL and is thought to assist in the transfer of the ammonia molecule from PurQ to PurL. This Archaeoglobus fulgidus (strain ATCC 49558 / DSM 4304 / JCM 9628 / NBRC 100126 / VC-16) protein is Phosphoribosylformylglycinamidine synthase subunit PurS.